The sequence spans 138 residues: Large ribosomal subunit protein mL54 (138 aa).

Residues 1 to 16 (MAARRLFGATGSWARW) constitute a mitochondrion transit peptide.

It belongs to the mitochondrion-specific ribosomal protein mL54 family. Component of the mitochondrial ribosome large subunit (39S) which comprises a 16S rRNA and about 50 distinct proteins.

The protein localises to the mitochondrion. In Bos taurus (Bovine), this protein is Large ribosomal subunit protein mL54 (MRPL54).